A 352-amino-acid polypeptide reads, in one-letter code: Probable protein kinase DDB_G0291842 (352 aa).

The interval 1–57 (MRPLPDQSAFEDKSELVSKKQKNEDENNENRSPETPRTPKVCPKTPTKTPLRTPTKN) is disordered. Over residues 10–34 (FEDKSELVSKKQKNEDENNENRSPE) the composition is skewed to basic and acidic residues. Over residues 38 to 56 (TPKVCPKTPTKTPLRTPTK) the composition is skewed to low complexity. A Protein kinase domain is found at 77–331 (FEYINQIGEG…IQSLLKYDKL (255 aa)). ATP is bound by residues 83-91 (IGEGSFAKV) and K106. Catalysis depends on D207, which acts as the Proton acceptor. Mg(2+)-binding residues include N212 and D225.

This sequence belongs to the protein kinase superfamily. Ser/Thr protein kinase family. WEE1 subfamily.

It carries out the reaction L-seryl-[protein] + ATP = O-phospho-L-seryl-[protein] + ADP + H(+). It catalyses the reaction L-threonyl-[protein] + ATP = O-phospho-L-threonyl-[protein] + ADP + H(+). The protein is Probable protein kinase DDB_G0291842 of Dictyostelium discoideum (Social amoeba).